The chain runs to 202 residues: MEHYISLFVKSVFIENMALAFFLGMCTFIAISKKVETAIGLGIAVVVVQAITVPANNLLYAYLLKEGALAWAGLPDIDLSFLGFLSYIGVIAAIVQILEMLLDKYVPSLYNALGIYLPLITVNCAIMAGSLFMVERDYNFPESVVYGIGSGFSWALAIALLAGIREKLKYSDVPEGLQGLGIAFITIGLMSLGFMSFSGIQL.

The next 6 membrane-spanning stretches (helical) occupy residues Ser-11–Ile-31, Val-35–Ala-55, Phe-81–Leu-101, Gly-114–Val-134, Val-144–Ile-164, and Leu-180–Ile-200.

This sequence belongs to the NqrDE/RnfAE family. Composed of six subunits; NqrA, NqrB, NqrC, NqrD, NqrE and NqrF.

It is found in the cell inner membrane. The enzyme catalyses a ubiquinone + n Na(+)(in) + NADH + H(+) = a ubiquinol + n Na(+)(out) + NAD(+). Functionally, NQR complex catalyzes the reduction of ubiquinone-1 to ubiquinol by two successive reactions, coupled with the transport of Na(+) ions from the cytoplasm to the periplasm. NqrA to NqrE are probably involved in the second step, the conversion of ubisemiquinone to ubiquinol. This is Na(+)-translocating NADH-quinone reductase subunit E from Azotobacter vinelandii (strain DJ / ATCC BAA-1303).